The chain runs to 99 residues: Large ribosomal subunit protein eL30 (99 aa).

This sequence belongs to the eukaryotic ribosomal protein eL30 family.

This chain is Large ribosomal subunit protein eL30, found in Methanosarcina acetivorans (strain ATCC 35395 / DSM 2834 / JCM 12185 / C2A).